Reading from the N-terminus, the 1314-residue chain is Condensin-2 complex subunit CAP-D3 (1314 aa).

10 HEAT repeats span residues 20–58 (ESDY…SFLR), 98–136 (PIAF…KKRG), 184–222 (KSLV…GVLN), 231–267 (TAAE…SLAK), 269–310 (NPEL…AMEV), 331–360 (RVLA…GLKD), 361–398 (SWGL…FLSG), 417–455 (SEGK…LMGG), 457–493 (FDGS…ICTD), and 494–532 (EIVT…ERIL). Residues 116 to 150 (DDSAGQGSNSQREKGNKKKRGRGKRNLGYEDGEET) form a disordered region. Residues 130 to 140 (GNKKKRGRGKR) show a composition bias toward basic residues. Residues 789-796 (SRRSKRLD) carry the Nuclear localization signal motif. HEAT repeat units follow at residues 821–859 (SADT…KQKA), 878–916 (GKLA…VHYT), 917–954 (AMIE…RDYV), 956–992 (WRGV…VKAP), 1053–1091 (QMAP…SVLQ), and 1138–1179 (KGLI…DYKN). Disordered stretches follow at residues 1210-1237 (MANQ…ENVR) and 1265-1314 (VNGG…DDES).

Component of the condensin-2 complex. Present in buds.

It localises to the nucleus. The protein localises to the chromosome. Functionally, regulatory subunit of the condensin-2 complex, a complex which establishes mitotic chromosome architecture and is involved in physical rigidity of the chromatid axis. May promote the resolution of double-strand DNA catenanes (intertwines) between sister chromatids. Required for plant vigor, fertility, chromatin condensation and sister chromatid cohesion both during mitosis and meiosis. Necessary to maintain normal structural integrity of the meiotic chromosomes during the two nuclear divisions of gametogenesis, especially to prevent interchromosome connections at metaphase I. Seems also involved in crossover formation during meiotic prophase I. Prevents centromeric and pericentromeric heterochromatin repeats association. This is Condensin-2 complex subunit CAP-D3 from Arabidopsis thaliana (Mouse-ear cress).